The following is a 918-amino-acid chain: Melanoma-associated antigen E1 (918 aa).

Disordered stretches follow at residues 1–140 (MSLV…GSKA), 154–227 (EQRH…SNGL), and 367–388 (SQMSLAAEGPSASGMPTEANNP). Over residues 8-23 (SRRRRGGRANARRNNG) the composition is skewed to basic residues. 3 stretches are compositionally biased toward polar residues: residues 70 to 96 (VPPTASEGSSAPRQFIISQGPNTSEMP), 113 to 126 (GLNTAMSITASEGP), and 213 to 227 (EDPSTSVPPTDSNGL). MAGE domains are found at residues 459–658 (MEQN…YNEA) and 706–897 (LESK…YREA). The segment at 704 to 918 (SRLESKARKL…RRPLIVRNLR (215 aa)) is interaction with DTNA.

Interacts with DTNA. Interacts with TRIM28. In terms of tissue distribution, expressed in cell bodies and dendrites of hippocampal and Purkinje neurons. Also expressed in peripheral nerve, where it localizes to the perineurium and myelin (at protein level). Predominantly expressed in brain and at low levels in the heart, liver, kidney, spleen, testis, lung, thymus, placenta and skeletal muscle.

It localises to the cytoplasm. The protein localises to the perinuclear region. Its subcellular location is the nucleus. The protein resides in the cell membrane. May enhance ubiquitin ligase activity of RING-type zinc finger-containing E3 ubiquitin-protein ligases. Proposed to act through recruitment and/or stabilization of the Ubl-conjugating enzyme (E2) at the E3:substrate complex. This Mus musculus (Mouse) protein is Melanoma-associated antigen E1 (Magee1).